Consider the following 315-residue polypeptide: 4-hydroxy-3-methylbut-2-enyl diphosphate reductase (315 aa).

[4Fe-4S] cluster is bound at residue Cys-12. His-41 and His-74 together coordinate (2E)-4-hydroxy-3-methylbut-2-enyl diphosphate. Dimethylallyl diphosphate-binding residues include His-41 and His-74. The isopentenyl diphosphate site is built by His-41 and His-74. A [4Fe-4S] cluster-binding site is contributed by Cys-96. His-124 is a (2E)-4-hydroxy-3-methylbut-2-enyl diphosphate binding site. His-124 provides a ligand contact to dimethylallyl diphosphate. Isopentenyl diphosphate is bound at residue His-124. Glu-126 functions as the Proton donor in the catalytic mechanism. Thr-168 contributes to the (2E)-4-hydroxy-3-methylbut-2-enyl diphosphate binding site. Residue Cys-198 participates in [4Fe-4S] cluster binding. Residues Ser-226, Ser-227, Asn-228, and Ser-270 each contribute to the (2E)-4-hydroxy-3-methylbut-2-enyl diphosphate site. Dimethylallyl diphosphate-binding residues include Ser-226, Ser-227, Asn-228, and Ser-270. Residues Ser-226, Ser-227, Asn-228, and Ser-270 each coordinate isopentenyl diphosphate.

The protein belongs to the IspH family. It depends on [4Fe-4S] cluster as a cofactor.

It carries out the reaction isopentenyl diphosphate + 2 oxidized [2Fe-2S]-[ferredoxin] + H2O = (2E)-4-hydroxy-3-methylbut-2-enyl diphosphate + 2 reduced [2Fe-2S]-[ferredoxin] + 2 H(+). The enzyme catalyses dimethylallyl diphosphate + 2 oxidized [2Fe-2S]-[ferredoxin] + H2O = (2E)-4-hydroxy-3-methylbut-2-enyl diphosphate + 2 reduced [2Fe-2S]-[ferredoxin] + 2 H(+). The protein operates within isoprenoid biosynthesis; dimethylallyl diphosphate biosynthesis; dimethylallyl diphosphate from (2E)-4-hydroxy-3-methylbutenyl diphosphate: step 1/1. It functions in the pathway isoprenoid biosynthesis; isopentenyl diphosphate biosynthesis via DXP pathway; isopentenyl diphosphate from 1-deoxy-D-xylulose 5-phosphate: step 6/6. In terms of biological role, catalyzes the conversion of 1-hydroxy-2-methyl-2-(E)-butenyl 4-diphosphate (HMBPP) into a mixture of isopentenyl diphosphate (IPP) and dimethylallyl diphosphate (DMAPP). Acts in the terminal step of the DOXP/MEP pathway for isoprenoid precursor biosynthesis. The polypeptide is 4-hydroxy-3-methylbut-2-enyl diphosphate reductase (Pseudomonas putida (strain ATCC 700007 / DSM 6899 / JCM 31910 / BCRC 17059 / LMG 24140 / F1)).